A 101-amino-acid chain; its full sequence is Urease subunit beta (101 aa).

This sequence belongs to the urease beta subunit family. In terms of assembly, heterotrimer of UreA (gamma), UreB (beta) and UreC (alpha) subunits. Three heterotrimers associate to form the active enzyme.

The protein localises to the cytoplasm. The catalysed reaction is urea + 2 H2O + H(+) = hydrogencarbonate + 2 NH4(+). It participates in nitrogen metabolism; urea degradation; CO(2) and NH(3) from urea (urease route): step 1/1. This is Urease subunit beta from Rhizobium meliloti (strain 1021) (Ensifer meliloti).